A 343-amino-acid chain; its full sequence is Dihydroorotase (343 aa).

Residues His-14 and His-16 each contribute to the Zn(2+) site. Substrate is bound by residues 16–18 (HVR) and Asn-42. Zn(2+) contacts are provided by Lys-99, His-136, and His-174. Lys-99 is modified (N6-carboxylysine). His-136 provides a ligand contact to substrate. Leu-219 contributes to the substrate binding site. Asp-247 is a binding site for Zn(2+). Asp-247 is an active-site residue. 2 residues coordinate substrate: His-251 and Ala-263.

Belongs to the metallo-dependent hydrolases superfamily. DHOase family. Class II DHOase subfamily. Homodimer. The cofactor is Zn(2+).

The enzyme catalyses (S)-dihydroorotate + H2O = N-carbamoyl-L-aspartate + H(+). Its pathway is pyrimidine metabolism; UMP biosynthesis via de novo pathway; (S)-dihydroorotate from bicarbonate: step 3/3. In terms of biological role, catalyzes the reversible cyclization of carbamoyl aspartate to dihydroorotate. The sequence is that of Dihydroorotase from Variovorax paradoxus (strain S110).